The sequence spans 622 residues: MPPTQAESVIKNIIREIGQECAAHGEIVPETLVAFMVKAVVLDPSNGFNTDRTLTKSDVQKLVKLCVNRLLDSKNPSLDTIKMQVYFDMNYTSREEFLEEHHQVIESRLSSVSREITDSRACVREELESLYRKIVSYVLLRSGLGSPTDIKIVREATAALQSVFPQTELGTFLTLSKKDKERQLKELTMIVTGIRLFNRDCGKGGEGIDDLPAILQEAIPATTQHVDSQLEVVQEQAYRYTAILEKVAKNPLMSQELQPYMLREALYNVRQCEIFLQVILSDIITCAQEVEMMIKQLEAQLEQLKLTVKSKTAVPTSQVFPIFIALSNLWTSFQDETVLISILSNLTTHLEPFLGAHDLFFPEKVMQVLLDGVTVKTDVCRIKEHIEDKVNVADFKKLEWLFPETTANFDKLLIQYRGFCAYTFATTDGLLLPGNPSIGILKYKDKYYTFNTRDAAYSFAENPENYIDIIREKAKRNAELIQLLELHQQFESLIQYSQMKEVDKRYIKPITKCETGTQTDTHLLPPTIVRSYEWNEWELRRKAIKLANLRRKVTHSVQTDHSHMRRENCSQVYPSKDVGTQSMREGSSRVPRPQIYIAGLRGGQTKTTYGVKVNLTRAVDET.

This sequence belongs to the CFAP206 family.

The protein resides in the cytoplasm. Its subcellular location is the cytoskeleton. The protein localises to the cilium axoneme. It is found in the cilium basal body. Functionally, essential for sperm motility and is involved in the regulation of the beating frequency of motile cilia on the epithelial cells of the respiratory tract. Required for the establishment of radial spokes in sperm flagella. The sequence is that of Cilia- and flagella-associated protein 206 from Bos taurus (Bovine).